A 536-amino-acid chain; its full sequence is Putative ATP-dependent RNA helicase L364 (536 aa).

Residues 47–214 enclose the Helicase ATP-binding domain; that stretch reads ISILLKYFLV…IPFYLMNFIP (168 aa). Residue 60-67 participates in ATP binding; that stretch reads SDTGVGKT. A DEAH box motif is present at residues 160 to 163; it reads DESH. Residues 288–334 adopt a coiled-coil conformation; it reads LSDDSDKIAEAYEEIAELMRELEEKKTQCKNHLAKIQKLKQEIELRK. Residues 338–486 enclose the Helicase C-terminal domain; the sequence is FIEQTQLYLE…ISAINDGDLE (149 aa). Residues 502-536 are disordered; that stretch reads VLNEPVNNPIEEPVNDPVKDPVEDLTDNQPNIVEV.

This sequence belongs to the DEAD box helicase family. DEAH subfamily.

The enzyme catalyses ATP + H2O = ADP + phosphate + H(+). The chain is Putative ATP-dependent RNA helicase L364 from Acanthamoeba polyphaga (Amoeba).